Consider the following 105-residue polypeptide: Pyrimidine/purine nucleoside phosphorylase (105 aa).

This sequence belongs to the nucleoside phosphorylase PpnP family.

The enzyme catalyses a purine D-ribonucleoside + phosphate = a purine nucleobase + alpha-D-ribose 1-phosphate. It carries out the reaction adenosine + phosphate = alpha-D-ribose 1-phosphate + adenine. It catalyses the reaction cytidine + phosphate = cytosine + alpha-D-ribose 1-phosphate. The catalysed reaction is guanosine + phosphate = alpha-D-ribose 1-phosphate + guanine. The enzyme catalyses inosine + phosphate = alpha-D-ribose 1-phosphate + hypoxanthine. It carries out the reaction thymidine + phosphate = 2-deoxy-alpha-D-ribose 1-phosphate + thymine. It catalyses the reaction uridine + phosphate = alpha-D-ribose 1-phosphate + uracil. The catalysed reaction is xanthosine + phosphate = alpha-D-ribose 1-phosphate + xanthine. In terms of biological role, catalyzes the phosphorolysis of diverse nucleosides, yielding D-ribose 1-phosphate and the respective free bases. Can use uridine, adenosine, guanosine, cytidine, thymidine, inosine and xanthosine as substrates. Also catalyzes the reverse reactions. In Cupriavidus taiwanensis (strain DSM 17343 / BCRC 17206 / CCUG 44338 / CIP 107171 / LMG 19424 / R1) (Ralstonia taiwanensis (strain LMG 19424)), this protein is Pyrimidine/purine nucleoside phosphorylase.